Here is a 219-residue protein sequence, read N- to C-terminus: Phosphoribosylformylglycinamidine synthase subunit PurQ (219 aa).

Residues 2–219 (KIAVITFPGS…KVVLDLILGS (218 aa)) form the Glutamine amidotransferase type-1 domain. The active-site Nucleophile is cysteine 86. Catalysis depends on residues histidine 195 and glutamate 197.

As to quaternary structure, part of the FGAM synthase complex composed of 1 PurL, 1 PurQ and 2 PurS subunits.

It is found in the cytoplasm. The enzyme catalyses N(2)-formyl-N(1)-(5-phospho-beta-D-ribosyl)glycinamide + L-glutamine + ATP + H2O = 2-formamido-N(1)-(5-O-phospho-beta-D-ribosyl)acetamidine + L-glutamate + ADP + phosphate + H(+). The catalysed reaction is L-glutamine + H2O = L-glutamate + NH4(+). It functions in the pathway purine metabolism; IMP biosynthesis via de novo pathway; 5-amino-1-(5-phospho-D-ribosyl)imidazole from N(2)-formyl-N(1)-(5-phospho-D-ribosyl)glycinamide: step 1/2. Functionally, part of the phosphoribosylformylglycinamidine synthase complex involved in the purines biosynthetic pathway. Catalyzes the ATP-dependent conversion of formylglycinamide ribonucleotide (FGAR) and glutamine to yield formylglycinamidine ribonucleotide (FGAM) and glutamate. The FGAM synthase complex is composed of three subunits. PurQ produces an ammonia molecule by converting glutamine to glutamate. PurL transfers the ammonia molecule to FGAR to form FGAM in an ATP-dependent manner. PurS interacts with PurQ and PurL and is thought to assist in the transfer of the ammonia molecule from PurQ to PurL. This chain is Phosphoribosylformylglycinamidine synthase subunit PurQ, found in Leptospira interrogans serogroup Icterohaemorrhagiae serovar copenhageni (strain Fiocruz L1-130).